Here is a 250-residue protein sequence, read N- to C-terminus: Triosephosphate isomerase (250 aa).

Position 8–10 (8–10) interacts with substrate; it reads NWK. The Electrophile role is filled by His-96. Glu-169 serves as the catalytic Proton acceptor. Substrate is bound by residues Gly-175, Ser-214, and 235 to 236; that span reads GG.

Belongs to the triosephosphate isomerase family. Homodimer.

It localises to the cytoplasm. It catalyses the reaction D-glyceraldehyde 3-phosphate = dihydroxyacetone phosphate. It participates in carbohydrate biosynthesis; gluconeogenesis. The protein operates within carbohydrate degradation; glycolysis; D-glyceraldehyde 3-phosphate from glycerone phosphate: step 1/1. Its function is as follows. Involved in the gluconeogenesis. Catalyzes stereospecifically the conversion of dihydroxyacetone phosphate (DHAP) to D-glyceraldehyde-3-phosphate (G3P). This is Triosephosphate isomerase from Oleidesulfovibrio alaskensis (strain ATCC BAA-1058 / DSM 17464 / G20) (Desulfovibrio alaskensis).